Consider the following 575-residue polypeptide: Proline--tRNA ligase (575 aa).

This sequence belongs to the class-II aminoacyl-tRNA synthetase family. ProS type 1 subfamily. Homodimer.

It is found in the cytoplasm. It catalyses the reaction tRNA(Pro) + L-proline + ATP = L-prolyl-tRNA(Pro) + AMP + diphosphate. Catalyzes the attachment of proline to tRNA(Pro) in a two-step reaction: proline is first activated by ATP to form Pro-AMP and then transferred to the acceptor end of tRNA(Pro). As ProRS can inadvertently accommodate and process non-cognate amino acids such as alanine and cysteine, to avoid such errors it has two additional distinct editing activities against alanine. One activity is designated as 'pretransfer' editing and involves the tRNA(Pro)-independent hydrolysis of activated Ala-AMP. The other activity is designated 'posttransfer' editing and involves deacylation of mischarged Ala-tRNA(Pro). The misacylated Cys-tRNA(Pro) is not edited by ProRS. The chain is Proline--tRNA ligase from Heliobacterium modesticaldum (strain ATCC 51547 / Ice1).